Reading from the N-terminus, the 372-residue chain is N-methyl-L-tryptophan oxidase (372 aa).

D4–H34 provides a ligand contact to FAD. The residue at position 308 (C308) is an S-8alpha-FAD cysteine.

The protein belongs to the MSOX/MTOX family. MTOX subfamily. In terms of assembly, monomer. The cofactor is FAD.

It carries out the reaction N(alpha)-methyl-L-tryptophan + O2 + H2O = L-tryptophan + formaldehyde + H2O2. Its function is as follows. Catalyzes the oxidative demethylation of N-methyl-L-tryptophan. The polypeptide is N-methyl-L-tryptophan oxidase (Escherichia coli O81 (strain ED1a)).